We begin with the raw amino-acid sequence, 258 residues long: Na(+)-translocating NADH-quinone reductase subunit C (258 aa).

The helical transmembrane segment at 14 to 34 threads the bilayer; it reads LIVVLAVSLICSVIVAGAVVG. At Ser-226 the chain carries FMN phosphoryl serine.

This sequence belongs to the NqrC family. As to quaternary structure, composed of six subunits; NqrA, NqrB, NqrC, NqrD, NqrE and NqrF. The cofactor is FMN.

It is found in the cell inner membrane. The enzyme catalyses a ubiquinone + n Na(+)(in) + NADH + H(+) = a ubiquinol + n Na(+)(out) + NAD(+). Its function is as follows. NQR complex catalyzes the reduction of ubiquinone-1 to ubiquinol by two successive reactions, coupled with the transport of Na(+) ions from the cytoplasm to the periplasm. NqrA to NqrE are probably involved in the second step, the conversion of ubisemiquinone to ubiquinol. This is Na(+)-translocating NADH-quinone reductase subunit C from Neisseria meningitidis serogroup B (strain ATCC BAA-335 / MC58).